Reading from the N-terminus, the 37-residue chain is Cytochrome b6-f complex subunit 5 (37 aa).

The helical transmembrane segment at 5-25 threads the bilayer; it reads LLSGIVLGMITVSAFGLFVAA.

The protein belongs to the PetG family. As to quaternary structure, the 4 large subunits of the cytochrome b6-f complex are cytochrome b6, subunit IV (17 kDa polypeptide, PetD), cytochrome f and the Rieske protein, while the 4 small subunits are PetG, PetL, PetM and PetN. The complex functions as a dimer.

It localises to the plastid. It is found in the chloroplast thylakoid membrane. Component of the cytochrome b6-f complex, which mediates electron transfer between photosystem II (PSII) and photosystem I (PSI), cyclic electron flow around PSI, and state transitions. PetG is required for either the stability or assembly of the cytochrome b6-f complex. This is Cytochrome b6-f complex subunit 5 from Thalassiosira pseudonana (Marine diatom).